The chain runs to 199 residues: Charged multivesicular body protein 1b (199 aa).

Coiled-coil stretches lie at residues 15-42 (AKEL…AIQK) and 178-199 (TSVA…RDQV). The disordered stretch occupies residues 167-199 (ELPQGQTGSVGTSVASTEQDELSQRLARLRDQV). Positions 170-183 (QGQTGSVGTSVAST) are enriched in polar residues. The MIT-interacting motif signature appears at 186-196 (DELSQRLARLR).

The protein belongs to the SNF7 family.

The protein resides in the cytoplasm. It is found in the cytosol. The protein localises to the endosome. Its subcellular location is the late endosome membrane. Functionally, probable peripherally associated component of the endosomal sorting required for transport complex III (ESCRT-III) which is involved in multivesicular bodies (MVBs) formation and sorting of endosomal cargo proteins into MVBs. MVBs contain intraluminal vesicles (ILVs) that are generated by invagination and scission from the limiting membrane of the endosome and mostly are delivered to lysosomes enabling degradation of membrane proteins, such as stimulated growth factor receptors, lysosomal enzymes and lipids. The protein is Charged multivesicular body protein 1b (chmp1b) of Xenopus tropicalis (Western clawed frog).